The chain runs to 1275 residues: O-antigen biosynthesis protein RfbC (1275 aa).

Involved in O-antigen biosynthesis. The protein is O-antigen biosynthesis protein RfbC (rfbC) of Myxococcus xanthus.